The following is an 839-amino-acid chain: Taste receptor type 1 member 2 (839 aa).

A signal peptide spans Met-1 to Ala-19. Residues Glu-20–Thr-566 lie on the Extracellular side of the membrane. Asn-84, Asn-248, Asn-292, Asn-312, Asn-368, Asn-428, Asn-487, and Asn-527 each carry an N-linked (GlcNAc...) asparagine glycan. The chain crosses the membrane as a helical span at residues Ile-567–Phe-587. Over Trp-588–Pro-602 the chain is Cytoplasmic. A helical transmembrane segment spans residues Met-603 to Gly-623. At Pro-624–Ala-635 the chain is on the extracellular side. Residues Leu-636–Val-656 traverse the membrane as a helical segment. At Cys-657–Ser-681 the chain is on the cytoplasmic side. Residues Met-682 to Leu-702 form a helical membrane-spanning segment. The Extracellular portion of the chain corresponds to Ser-703 to Ser-727. A helical transmembrane segment spans residues Leu-728–Met-748. The Cytoplasmic portion of the chain corresponds to Gly-749 to Lys-760. A helical membrane pass occupies residues Phe-761–Ser-781. Residues Ala-782 to Ser-784 lie on the Extracellular side of the membrane. A helical membrane pass occupies residues Gly-785 to Leu-805. The Cytoplasmic segment spans residues Gly-806–Asp-839.

The protein belongs to the G-protein coupled receptor 3 family. TAS1R subfamily. Forms heterodimers with TAS1R3.

The protein localises to the cell membrane. Putative taste receptor. TAS1R2/TAS1R3 recognizes diverse natural and synthetic sweeteners. This chain is Taste receptor type 1 member 2 (TAS1R2), found in Homo sapiens (Human).